Consider the following 538-residue polypeptide: Cytochrome c-552 (538 aa).

A signal peptide spans methionine 1–alanine 55. Residue histidine 133 participates in heme c binding. Cysteine 161, cysteine 164, and lysine 165 together coordinate heme. Heme c-binding residues include cysteine 199, cysteine 202, histidine 203, cysteine 264, cysteine 267, and histidine 268. Ca(2+)-binding residues include glutamate 270, tyrosine 271, lysine 316, and glutamine 318. Tyrosine 271 provides a ligand contact to substrate. Substrate is bound at residue histidine 319. Heme c contacts are provided by histidine 330, cysteine 337, cysteine 340, histidine 341, histidine 356, cysteine 369, cysteine 372, histidine 373, and histidine 448.

It belongs to the cytochrome c-552 family. It depends on Ca(2+) as a cofactor. The cofactor is heme c.

Its subcellular location is the periplasm. It catalyses the reaction 6 Fe(III)-[cytochrome c] + NH4(+) + 2 H2O = 6 Fe(II)-[cytochrome c] + nitrite + 8 H(+). It participates in nitrogen metabolism; nitrate reduction (assimilation). In terms of biological role, catalyzes the reduction of nitrite to ammonia, consuming six electrons in the process. The protein is Cytochrome c-552 of Haemophilus influenzae (strain ATCC 51907 / DSM 11121 / KW20 / Rd).